A 154-amino-acid chain; its full sequence is Myoglobin (154 aa).

The Globin domain occupies 2-148 (GLSDGEWQQV…FRNDIAAKYK (147 aa)). S4 is modified (phosphoserine). H65 is a binding site for nitrite. Position 65 (H65) interacts with O2. H94 contributes to the heme b binding site.

This sequence belongs to the globin family. Monomeric.

It localises to the cytoplasm. Its subcellular location is the sarcoplasm. It carries out the reaction Fe(III)-heme b-[protein] + nitric oxide + H2O = Fe(II)-heme b-[protein] + nitrite + 2 H(+). The enzyme catalyses H2O2 + AH2 = A + 2 H2O. In terms of biological role, monomeric heme protein which primary function is to store oxygen and facilitate its diffusion within muscle tissues. Reversibly binds oxygen through a pentacoordinated heme iron and enables its timely and efficient release as needed during periods of heightened demand. Depending on the oxidative conditions of tissues and cells, and in addition to its ability to bind oxygen, it also has a nitrite reductase activity whereby it regulates the production of bioactive nitric oxide. Under stress conditions, like hypoxia and anoxia, it also protects cells against reactive oxygen species thanks to its pseudoperoxidase activity. The polypeptide is Myoglobin (MB) (Equus quagga burchellii (Burchell's zebra)).